The following is a 225-amino-acid chain: Ribosomal RNA large subunit methyltransferase E (225 aa).

5 residues coordinate S-adenosyl-L-methionine: Gly76, Trp78, Asp99, Asp115, and Asp139. The active-site Proton acceptor is Lys179.

The protein belongs to the class I-like SAM-binding methyltransferase superfamily. RNA methyltransferase RlmE family.

It localises to the cytoplasm. The catalysed reaction is uridine(2552) in 23S rRNA + S-adenosyl-L-methionine = 2'-O-methyluridine(2552) in 23S rRNA + S-adenosyl-L-homocysteine + H(+). Its function is as follows. Specifically methylates the uridine in position 2552 of 23S rRNA at the 2'-O position of the ribose in the fully assembled 50S ribosomal subunit. In Afipia carboxidovorans (strain ATCC 49405 / DSM 1227 / KCTC 32145 / OM5) (Oligotropha carboxidovorans), this protein is Ribosomal RNA large subunit methyltransferase E.